Consider the following 353-residue polypeptide: Paraneoplastic antigen Ma1 (353 aa).

It belongs to the PNMA family. In terms of tissue distribution, testis- and brain-specific. In some cancer patients, specifically expressed by paraneoplastic tumor cells.

It is found in the nucleus. Its subcellular location is the nucleolus. This Homo sapiens (Human) protein is Paraneoplastic antigen Ma1 (PNMA1).